The chain runs to 169 residues: Large ribosomal subunit protein uL10 (169 aa).

The protein belongs to the universal ribosomal protein uL10 family. Part of the ribosomal stalk of the 50S ribosomal subunit. The N-terminus interacts with L11 and the large rRNA to form the base of the stalk. The C-terminus forms an elongated spine to which L12 dimers bind in a sequential fashion forming a multimeric L10(L12)X complex.

Its function is as follows. Forms part of the ribosomal stalk, playing a central role in the interaction of the ribosome with GTP-bound translation factors. The polypeptide is Large ribosomal subunit protein uL10 (Rickettsia bellii (strain OSU 85-389)).